A 177-amino-acid polypeptide reads, in one-letter code: Large ribosomal subunit protein uL6 (177 aa).

This sequence belongs to the universal ribosomal protein uL6 family. As to quaternary structure, part of the 50S ribosomal subunit.

In terms of biological role, this protein binds to the 23S rRNA, and is important in its secondary structure. It is located near the subunit interface in the base of the L7/L12 stalk, and near the tRNA binding site of the peptidyltransferase center. The protein is Large ribosomal subunit protein uL6 of Brucella abortus (strain S19).